The chain runs to 261 residues: 3-methyl-2-oxobutanoate hydroxymethyltransferase (261 aa).

The Mg(2+) site is built by aspartate 42 and aspartate 81. Residues 42 to 43 (DS), aspartate 81, and lysine 110 contribute to the 3-methyl-2-oxobutanoate site. A Mg(2+)-binding site is contributed by glutamate 112. Glutamate 179 serves as the catalytic Proton acceptor.

It belongs to the PanB family. As to quaternary structure, homodecamer; pentamer of dimers. Requires Mg(2+) as cofactor.

It localises to the cytoplasm. It carries out the reaction 3-methyl-2-oxobutanoate + (6R)-5,10-methylene-5,6,7,8-tetrahydrofolate + H2O = 2-dehydropantoate + (6S)-5,6,7,8-tetrahydrofolate. It functions in the pathway cofactor biosynthesis; coenzyme A biosynthesis. Its function is as follows. Catalyzes the reversible reaction in which hydroxymethyl group from 5,10-methylenetetrahydrofolate is transferred onto alpha-ketoisovalerate to form ketopantoate. This is 3-methyl-2-oxobutanoate hydroxymethyltransferase from Pyrobaculum neutrophilum (strain DSM 2338 / JCM 9278 / NBRC 100436 / V24Sta) (Thermoproteus neutrophilus).